A 214-amino-acid chain; its full sequence is Ribonuclease HII (214 aa).

Residues 26-214 (EIVCGVDEAG…PVRAALDLIR (189 aa)) enclose the RNase H type-2 domain. A divalent metal cation-binding residues include D32, E33, and D124.

The protein belongs to the RNase HII family. Requires Mn(2+) as cofactor. Mg(2+) serves as cofactor.

It is found in the cytoplasm. The enzyme catalyses Endonucleolytic cleavage to 5'-phosphomonoester.. Endonuclease that specifically degrades the RNA of RNA-DNA hybrids. In Burkholderia orbicola (strain MC0-3), this protein is Ribonuclease HII.